The following is a 170-amino-acid chain: NADH-ubiquinone oxidoreductase chain 2 (170 aa).

4 consecutive transmembrane segments (helical) span residues 24–44, 67–87, 101–121, and 150–170; these read LLWM…IMMF, FLIF…GFLP, LFIL…YLRL, and LILN…YMIL.

The protein belongs to the complex I subunit 2 family.

The protein resides in the mitochondrion inner membrane. The enzyme catalyses a ubiquinone + NADH + 5 H(+)(in) = a ubiquinol + NAD(+) + 4 H(+)(out). Core subunit of the mitochondrial membrane respiratory chain NADH dehydrogenase (Complex I) that is believed to belong to the minimal assembly required for catalysis. Complex I functions in the transfer of electrons from NADH to the respiratory chain. The immediate electron acceptor for the enzyme is believed to be ubiquinone. This Anopheles albimanus (New world malaria mosquito) protein is NADH-ubiquinone oxidoreductase chain 2 (ND2).